A 735-amino-acid polypeptide reads, in one-letter code: Catalase-peroxidase (735 aa).

The interval 1-31 (MENNTNPISGQGKCPFSGGAAKQSAGAGTRN) is disordered. Positions 17–28 (SGGAAKQSAGAG) are enriched in low complexity. Positions 103 to 226 (WHSAGTYRVA…LAAVQMGLIY (124 aa)) form a cross-link, tryptophyl-tyrosyl-methioninium (Trp-Tyr) (with M-252). His104 functions as the Proton acceptor in the catalytic mechanism. Positions 226–252 (YVNPEGPNGNPDPLASARDIRETFARM) form a cross-link, tryptophyl-tyrosyl-methioninium (Tyr-Met) (with W-103). Heme b is bound at residue His267. The segment at 352–371 (KPKNGAGAGTVPDAHNSSKS) is disordered.

Belongs to the peroxidase family. Peroxidase/catalase subfamily. As to quaternary structure, homodimer or homotetramer. It depends on heme b as a cofactor. Post-translationally, formation of the three residue Trp-Tyr-Met cross-link is important for the catalase, but not the peroxidase activity of the enzyme.

The enzyme catalyses H2O2 + AH2 = A + 2 H2O. It carries out the reaction 2 H2O2 = O2 + 2 H2O. Its function is as follows. Bifunctional enzyme with both catalase and broad-spectrum peroxidase activity. The protein is Catalase-peroxidase of Flavobacterium psychrophilum (strain ATCC 49511 / DSM 21280 / CIP 103535 / JIP02/86).